The chain runs to 305 residues: tRNA pseudouridine synthase B (305 aa).

The Nucleophile role is filled by aspartate 39.

It belongs to the pseudouridine synthase TruB family. Type 1 subfamily.

It catalyses the reaction uridine(55) in tRNA = pseudouridine(55) in tRNA. Functionally, responsible for synthesis of pseudouridine from uracil-55 in the psi GC loop of transfer RNAs. This is tRNA pseudouridine synthase B from Staphylococcus saprophyticus subsp. saprophyticus (strain ATCC 15305 / DSM 20229 / NCIMB 8711 / NCTC 7292 / S-41).